We begin with the raw amino-acid sequence, 1137 residues long: Otoancorin (1137 aa).

The signal sequence occupies residues 1 to 23 (MSQGPRTCSLLLVLLLSHGGAYQ). Asn-156, Asn-211, Asn-244, Asn-289, Asn-321, Asn-380, Asn-384, Asn-530, Asn-594, Asn-740, and Asn-798 each carry an N-linked (GlcNAc...) asparagine glycan. Residues 1095-1115 (HSWQTDPLSSSPTWPASTGSP) show a composition bias toward polar residues. The segment at 1095–1119 (HSWQTDPLSSSPTWPASTGSPTGEP) is disordered. Gly-1113 is lipidated: GPI-anchor amidated glycine. A propeptide spans 1114 to 1137 (SPTGEPASQALWLGCTLLLLTAKS) (removed in mature form).

It belongs to the stereocilin family. In terms of tissue distribution, expressed in the inner ear and vestibule.

It localises to the apical cell membrane. Its subcellular location is the secreted. It is found in the extracellular space. The protein localises to the extracellular matrix. In terms of biological role, may act as an adhesion molecule. This chain is Otoancorin (Otoa), found in Mus musculus (Mouse).